A 337-amino-acid polypeptide reads, in one-letter code: Inositol 2-dehydrogenase (337 aa).

This sequence belongs to the Gfo/Idh/MocA family. As to quaternary structure, homotetramer.

The catalysed reaction is myo-inositol + NAD(+) = scyllo-inosose + NADH + H(+). Functionally, involved in the oxidation of myo-inositol (MI) to 2-keto-myo-inositol (2KMI or 2-inosose). The sequence is that of Inositol 2-dehydrogenase from Klebsiella pneumoniae subsp. pneumoniae (strain ATCC 700721 / MGH 78578).